Reading from the N-terminus, the 72-residue chain is Translation initiation factor IF-1 (72 aa).

In terms of domain architecture, S1-like spans 1-72 (MAKEGNIEME…SKGRIVYRAR (72 aa)).

It belongs to the IF-1 family. In terms of assembly, component of the 30S ribosomal translation pre-initiation complex which assembles on the 30S ribosome in the order IF-2 and IF-3, IF-1 and N-formylmethionyl-tRNA(fMet); mRNA recruitment can occur at any time during PIC assembly.

The protein localises to the cytoplasm. Its function is as follows. One of the essential components for the initiation of protein synthesis. Stabilizes the binding of IF-2 and IF-3 on the 30S subunit to which N-formylmethionyl-tRNA(fMet) subsequently binds. Helps modulate mRNA selection, yielding the 30S pre-initiation complex (PIC). Upon addition of the 50S ribosomal subunit IF-1, IF-2 and IF-3 are released leaving the mature 70S translation initiation complex. In Hahella chejuensis (strain KCTC 2396), this protein is Translation initiation factor IF-1.